The chain runs to 82 residues: Photosystem I iron-sulfur center (82 aa).

4Fe-4S ferredoxin-type domains are found at residues 2–31 and 37–68; these read SHTV…MVPW and GQIA…VRVY. Residues Cys-11, Cys-14, Cys-17, Cys-21, Cys-48, Cys-51, Cys-54, and Cys-58 each coordinate [4Fe-4S] cluster.

In terms of assembly, the eukaryotic PSI reaction center is composed of at least 11 subunits. Requires [4Fe-4S] cluster as cofactor.

The protein localises to the plastid. It localises to the chloroplast thylakoid membrane. The catalysed reaction is reduced [plastocyanin] + hnu + oxidized [2Fe-2S]-[ferredoxin] = oxidized [plastocyanin] + reduced [2Fe-2S]-[ferredoxin]. Functionally, apoprotein for the two 4Fe-4S centers FA and FB of photosystem I (PSI); essential for photochemical activity. FB is the terminal electron acceptor of PSI, donating electrons to ferredoxin. The C-terminus interacts with PsaA/B/D and helps assemble the protein into the PSI complex. Required for binding of PsaD and PsaE to PSI. PSI is a plastocyanin/cytochrome c6-ferredoxin oxidoreductase, converting photonic excitation into a charge separation, which transfers an electron from the donor P700 chlorophyll pair to the spectroscopically characterized acceptors A0, A1, FX, FA and FB in turn. The chain is Photosystem I iron-sulfur center from Trieres chinensis (Marine centric diatom).